A 336-amino-acid polypeptide reads, in one-letter code: Holliday junction branch migration complex subunit RuvB (336 aa).

The interval M1 to Y184 is large ATPase domain (RuvB-L). ATP contacts are provided by residues L23, R24, G65, K68, T69, T70, E131–Y133, R174, Y184, and R221. T69 serves as a coordination point for Mg(2+). The tract at residues N185 to R255 is small ATPAse domain (RuvB-S). Positions K258–G336 are head domain (RuvB-H). The DNA site is built by R313 and R318.

This sequence belongs to the RuvB family. Homohexamer. Forms an RuvA(8)-RuvB(12)-Holliday junction (HJ) complex. HJ DNA is sandwiched between 2 RuvA tetramers; dsDNA enters through RuvA and exits via RuvB. An RuvB hexamer assembles on each DNA strand where it exits the tetramer. Each RuvB hexamer is contacted by two RuvA subunits (via domain III) on 2 adjacent RuvB subunits; this complex drives branch migration. In the full resolvosome a probable DNA-RuvA(4)-RuvB(12)-RuvC(2) complex forms which resolves the HJ.

Its subcellular location is the cytoplasm. It carries out the reaction ATP + H2O = ADP + phosphate + H(+). In terms of biological role, the RuvA-RuvB-RuvC complex processes Holliday junction (HJ) DNA during genetic recombination and DNA repair, while the RuvA-RuvB complex plays an important role in the rescue of blocked DNA replication forks via replication fork reversal (RFR). RuvA specifically binds to HJ cruciform DNA, conferring on it an open structure. The RuvB hexamer acts as an ATP-dependent pump, pulling dsDNA into and through the RuvAB complex. RuvB forms 2 homohexamers on either side of HJ DNA bound by 1 or 2 RuvA tetramers; 4 subunits per hexamer contact DNA at a time. Coordinated motions by a converter formed by DNA-disengaged RuvB subunits stimulates ATP hydrolysis and nucleotide exchange. Immobilization of the converter enables RuvB to convert the ATP-contained energy into a lever motion, pulling 2 nucleotides of DNA out of the RuvA tetramer per ATP hydrolyzed, thus driving DNA branch migration. The RuvB motors rotate together with the DNA substrate, which together with the progressing nucleotide cycle form the mechanistic basis for DNA recombination by continuous HJ branch migration. Branch migration allows RuvC to scan DNA until it finds its consensus sequence, where it cleaves and resolves cruciform DNA. The polypeptide is Holliday junction branch migration complex subunit RuvB (Ligilactobacillus salivarius (strain UCC118) (Lactobacillus salivarius)).